We begin with the raw amino-acid sequence, 78 residues long: Sec-independent protein translocase protein TatA (78 aa).

A helical membrane pass occupies residues 1 to 21 (MGSLSIWHWIVVIGVVLLLFG). Over residues 42–60 (GLQDDEKTAEKPEPVKSID) the composition is skewed to basic and acidic residues. The tract at residues 42-78 (GLQDDEKTAEKPEPVKSIDHTAPPAAAPRTDVGSKVV) is disordered.

It belongs to the TatA/E family. In terms of assembly, the Tat system comprises two distinct complexes: a TatABC complex, containing multiple copies of TatA, TatB and TatC subunits, and a separate TatA complex, containing only TatA subunits. Substrates initially bind to the TatABC complex, which probably triggers association of the separate TatA complex to form the active translocon.

Its subcellular location is the cell inner membrane. In terms of biological role, part of the twin-arginine translocation (Tat) system that transports large folded proteins containing a characteristic twin-arginine motif in their signal peptide across membranes. TatA could form the protein-conducting channel of the Tat system. This chain is Sec-independent protein translocase protein TatA, found in Rhodopseudomonas palustris (strain BisB18).